The sequence spans 238 residues: Ribonuclease HII (238 aa).

Residues 12–197 (GIVAGVDEAG…VLELLTDDLL (186 aa)) form the RNase H type-2 domain. Residues aspartate 18, glutamate 19, and aspartate 107 each coordinate a divalent metal cation.

Belongs to the RNase HII family. Mn(2+) serves as cofactor. It depends on Mg(2+) as a cofactor.

It is found in the cytoplasm. It catalyses the reaction Endonucleolytic cleavage to 5'-phosphomonoester.. Functionally, endonuclease that specifically degrades the RNA of RNA-DNA hybrids. In Thermotoga petrophila (strain ATCC BAA-488 / DSM 13995 / JCM 10881 / RKU-1), this protein is Ribonuclease HII.